A 293-amino-acid chain; its full sequence is Cytidine deaminase 6 (293 aa).

CMP/dCMP-type deaminase domains follow at residues 16–147 (RGPS…FGPD) and 178–293 (EDCS…TNKN). 57 to 59 (NVE) is a binding site for substrate. Residue His-70 participates in Zn(2+) binding. Glu-72 serves as the catalytic Proton donor. Zn(2+)-binding residues include Cys-103 and Cys-106.

It belongs to the cytidine and deoxycytidylate deaminase family. Homodimer. The cofactor is Zn(2+).

The enzyme catalyses cytidine + H2O + H(+) = uridine + NH4(+). It catalyses the reaction 2'-deoxycytidine + H2O + H(+) = 2'-deoxyuridine + NH4(+). Its function is as follows. This enzyme scavenges exogenous and endogenous cytidine and 2'-deoxycytidine for UMP synthesis. This is Cytidine deaminase 6 (CDA6) from Arabidopsis thaliana (Mouse-ear cress).